The following is a 2415-amino-acid chain: Bradyzoite-formation deficient protein 1 (2415 aa).

3 disordered regions span residues 369 to 392 (WNKPEAARQEYHRASASARGPEET), 418 to 481 (HLTS…PYTR), and 761 to 845 (DGCG…QDTQ). A compositionally biased stretch (basic residues) spans 419–429 (LTSRQHPNPRP). The segment covering 430–443 (RMKEEHCGREREVL) has biased composition (basic and acidic residues). 2 stretches are compositionally biased toward polar residues: residues 444 to 460 (SSEQPSDCGETQKTPAS) and 832 to 843 (PRTTSSSSYGQD). Positions 921–968 (WSAEEDASLAELVSRKGFKWALISSQLTGAFGIPRTGKQCRERWFNHV) constitute a Myb-like domain. The region spanning 969–1023 (NPEVKKGDWSAEEDAMILMLQNELGNRWATIAKKLRGRTENAVKNRFISLSNARL) is the HTH myb-type domain. Residues 996 to 1019 (WATIAKKLRGRTENAVKNRFISLS) constitute a DNA-binding region (H-T-H motif). Disordered regions lie at residues 1027 to 1050 (RPKRDGSSADCFSNRRTGSGKSSG), 1098 to 1127 (VSRPRQCTGTSPSCGHPSAGEGDPSHLKNT), 1206 to 1270 (NDER…NGLD), 1319 to 1343 (PACDHRGAPQNSVESGEQSPDAQRQ), 1501 to 1521 (QLWTSQETESDTNPSPNQQHE), 1905 to 1932 (VSRDKQREPPKNGLTGCDVPEYLGTSQS), 1959 to 2013 (RVRW…GSTA), and 2161 to 2222 (GTDA…EMQD). The segment covering 1036–1050 (DCFSNRRTGSGKSSG) has biased composition (polar residues). A compositionally biased stretch (basic and acidic residues) spans 1227–1237 (AHEHADIARSD). 2 stretches are compositionally biased toward polar residues: residues 1327–1343 (PQNSVESGEQSPDAQRQ) and 1501–1520 (QLWTSQETESDTNPSPNQQH). The span at 1974–1985 (SVSSGASNSATT) shows a compositional bias: polar residues. The span at 2181-2197 (QAHRRDGHDMQRVQRCD) shows a compositional bias: basic and acidic residues.

The protein resides in the nucleus. Its function is as follows. Master transcription factor that controls the differentiation of acute-stage tachyzoite parasites into chronic-stage bradyzoites, which form intracellular cysts resistant to immune clearance and existing therapies. Sufficient to drive differentiation into bradyzoite stage. Following translation in response to stress conditions, binds to the promoter of many chronic stage-specific genes and promotes their expression, thereby driving differentiation into bradyzoites. This chain is Bradyzoite-formation deficient protein 1, found in Toxoplasma gondii (strain ATCC 50611 / Me49).